The sequence spans 413 residues: 2,3-bisphosphoglycerate-independent phosphoglycerate mutase (413 aa).

This sequence belongs to the BPG-independent phosphoglycerate mutase family. A-PGAM subfamily.

It catalyses the reaction (2R)-2-phosphoglycerate = (2R)-3-phosphoglycerate. It participates in carbohydrate degradation; glycolysis; pyruvate from D-glyceraldehyde 3-phosphate: step 3/5. In terms of biological role, catalyzes the interconversion of 2-phosphoglycerate and 3-phosphoglycerate. The protein is 2,3-bisphosphoglycerate-independent phosphoglycerate mutase of Sulfurisphaera tokodaii (strain DSM 16993 / JCM 10545 / NBRC 100140 / 7) (Sulfolobus tokodaii).